We begin with the raw amino-acid sequence, 1774 residues long: U3 small nucleolar RNA-associated protein 10 (1774 aa).

Residues 1209-1228 are disordered; sequence TEQGKSDGDESGSEPDNDNP. The stretch at 1734-1772 is one HEAT repeat; the sequence is LVPVIAELLEDDDEEVEQEVRTGLVKVVETVLGEPFDRY.

It belongs to the HEATR1/UTP10 family. As to quaternary structure, component of the ribosomal small subunit (SSU) processome.

The protein resides in the nucleus. It localises to the nucleolus. Its function is as follows. Involved in nucleolar processing of pre-18S ribosomal RNA. Involved in ribosome biosynthesis. The chain is U3 small nucleolar RNA-associated protein 10 from Eremothecium gossypii (strain ATCC 10895 / CBS 109.51 / FGSC 9923 / NRRL Y-1056) (Yeast).